The primary structure comprises 500 residues: uncharacterized protein (500 aa).

Residues 27 to 47 (IFALILIVFGFIIAPLLPGIF) form a helical membrane-spanning segment.

Its subcellular location is the membrane. This is an uncharacterized protein from Borreliella burgdorferi (strain ATCC 35210 / DSM 4680 / CIP 102532 / B31) (Borrelia burgdorferi).